A 254-amino-acid polypeptide reads, in one-letter code: tRNA 2'-phosphotransferase 1 (254 aa).

The residue at position 1 (methionine 1) is an N-acetylmethionine. 2 disordered regions span residues 1–30 (MNSF…DRDV) and 225–254 (RKPL…MTQQ). Over residues 233–244 (NEEKEHQRDSKH) the composition is skewed to basic and acidic residues.

It belongs to the KptA/TPT1 family.

It carries out the reaction 2'-phospho-[ligated tRNA] + NAD(+) = mature tRNA + ADP-alpha-D-ribose 1'',2''-cyclic phosphate + nicotinamide. In terms of biological role, catalyzes the last step of tRNA splicing, the transfer of the splice junction 2'-phosphate from ligated tRNA to NAD to produce ADP-ribose 1''-2'' cyclic phosphate. The polypeptide is tRNA 2'-phosphotransferase 1 (TRPT1) (Bos taurus (Bovine)).